The following is a 403-amino-acid chain: GPI mannosyltransferase 1 (403 aa).

Topologically, residues 1–4 are cytoplasmic; sequence MTGE. The chain crosses the membrane as a helical span at residues 5-25; it reads EWGLTVLSFLVRVGFFLFGIY. Over 26–78 the chain is Lumenal; the sequence is QDANFKVRYTDIDYFVFHDAAKYVYEGKSPYARDTYRYTPLLSWLLVPNHYFG. Residues 79–99 traverse the membrane as a helical segment; it reads WFHLGKVIFVIFDLVTGLIIM. At 100 to 110 the chain is on the cytoplasmic side; sequence KLLNQAISRKR. A helical transmembrane segment spans residues 111–131; that stretch reads ALILESIWLLNPMVITISTRG. Asn132 is a topological domain (lumenal). A helical transmembrane segment spans residues 133–149; that stretch reads AESVLCCLIMFTLFFLQ. Over 150-160 the chain is Cytoplasmic; it reads KSRYTLAGILY. The chain crosses the membrane as a helical span at residues 161–181; that stretch reads GLSIHFKIYPIIYCIPIAIFI. Topologically, residues 182–193 are lumenal; that stretch reads YYNKRNQGPRTQ. The chain crosses the membrane as a helical span at residues 194 to 214; the sequence is LTSLLNIGLSTLTTLLGCGWA. Residues 215–266 lie on the Cytoplasmic side of the membrane; that stretch reads MYKIYGYEFLDQAYLYHLYRTDHRHNFSVWNMLLYLDSANKENGESNLSRYA. Residues 267-287 form a helical membrane-spanning segment; that stretch reads FVPQLLLVLVTGCLEWWNPTF. Residues 288–310 are Lumenal-facing; sequence DNLLRVLFVQTFAFVTYNKVCTS. Residues 311-331 form a helical membrane-spanning segment; sequence QYFVWYLIFLPFYLSRTHIGW. Over 332–334 the chain is Cytoplasmic; that stretch reads KKG. A helical membrane pass occupies residues 335-355; that stretch reads LLMATLWVGTQGIWLSQGYYL. Topologically, residues 356–361 are lumenal; it reads EFEGKN. The chain crosses the membrane as a helical span at residues 362–382; that stretch reads VFYPGLFIASVLFFVTNVWLL. The Cytoplasmic portion of the chain corresponds to 383 to 403; sequence GQFITDIKIPTQPTVSNKKNN.

This sequence belongs to the PIGM family.

Its subcellular location is the endoplasmic reticulum membrane. It functions in the pathway glycolipid biosynthesis; glycosylphosphatidylinositol-anchor biosynthesis. Its function is as follows. Mannosyltransferase involved in glycosylphosphatidylinositol-anchor biosynthesis. Transfers the first alpha-1,4-mannose to GlcN-acyl-PI during GPI precursor assembly. Required for cell wall integrity. This Saccharomyces cerevisiae (strain ATCC 204508 / S288c) (Baker's yeast) protein is GPI mannosyltransferase 1 (GPI14).